A 335-amino-acid polypeptide reads, in one-letter code: Non-structural protein P9-1 (335 aa).

Residues 27-42 (FNANTKNQNQNTSNTQ) are compositionally biased toward low complexity. The disordered stretch occupies residues 27 to 48 (FNANTKNQNQNTSNTQSSGGIT).

This chain is Non-structural protein P9-1 (S9), found in Fiji disease virus (isolate Sugarcane) (FDV).